A 324-amino-acid polypeptide reads, in one-letter code: Putative F-box/kelch-repeat protein At5g28160 (324 aa).

Residues 7–54 (RPSFLSLPDEIILSCLARISRSYYPKLSLVCKTFRTLLISNELIVARL) form the F-box domain. The stretch at 170 to 216 (KIYVMGGCMADESVNWGEVFDIKTQTWEALPDPGPEFRFSSIRKIDV) is one Kelch repeat.

The sequence is that of Putative F-box/kelch-repeat protein At5g28160 from Arabidopsis thaliana (Mouse-ear cress).